The following is a 64-amino-acid chain: Ferredoxin-2 (64 aa).

2 consecutive 4Fe-4S ferredoxin-type domains span residues 3–31 and 34–64; these read KYLY…MSSA and YAEV…WREE. Positions 12, 15, 18, and 54 each coordinate [4Fe-4S] cluster.

In terms of assembly, homodimer. The cofactor is [4Fe-4S] cluster.

Its function is as follows. Ferredoxins are iron-sulfur proteins that transfer electrons in a wide variety of metabolic reactions. The protein is Ferredoxin-2 of Nitratidesulfovibrio vulgaris (strain DSM 19637 / Miyazaki F) (Desulfovibrio vulgaris).